The sequence spans 44 residues: Photosystem I reaction center subunit IX (44 aa).

Residues 7–27 form a helical membrane-spanning segment; sequence YLSAAPVLSTIWFGALAGLLI.

It belongs to the PsaJ family.

The protein resides in the plastid. It localises to the chloroplast thylakoid membrane. May help in the organization of the PsaE and PsaF subunits. In Pelargonium hortorum (Common geranium), this protein is Photosystem I reaction center subunit IX.